A 2335-amino-acid polypeptide reads, in one-letter code: Pre-mRNA-processing-splicing factor 8 (2335 aa).

An N-acetylalanine modification is found at Ala-2. The tract at residues 812 to 1303 is reverse transcriptase homology domain; it reads TTVHWLESRR…KIQTRIKIGL (492 aa). Residues Ser-859 and Ser-1358 each carry the phosphoserine modification. The tract at residues 1304–1577 is linker; sequence NSKMPSRFPP…TLKISLIQIF (274 aa). Lys-1425 bears the N6,N6-dimethyllysine mark. The residue at position 1463 (Lys-1463) is an N6-acetyllysine. The tract at residues 1513–1526 is important for branch point selection; that stretch reads MKWKKLTNAQRSGL. The tract at residues 1581–1752 is restriction endonuclease homology domain; that stretch reads LWQKIHESIV…LRERIRKGLQ (172 aa). Positions 1669-2034 are involved in interaction with pre-mRNA 5' splice site; it reads GDYDSHDIER…QIAEIEKQTK (366 aa). The RNase H homology domain stretch occupies residues 1767–2020; that stretch reads NYGELFSNQI…ILGMEISAPS (254 aa). The 132-residue stretch at 2103 to 2234 folds into the MPN domain; that stretch reads TYILPKNVLK…LTAYKLTPSG (132 aa). The tract at residues 2301-2335 is required for interaction with EFTUD2 and SNRNP200; that stretch reads PKEFYHEVHRPSHFLNFALLQEGEVYSADREDLYA.

Part of the U5 snRNP complex. Component of the U4/U6-U5 tri-snRNP complex composed of the U4, U6 and U5 snRNAs and at least PRPF3, PRPF4, PRPF6, PRPF8, PRPF31, SNRNP200, TXNL4A, SNRNP40, DDX23, CD2BP2, PPIH, SNU13, EFTUD2, SART1 and USP39. Component of the U5.U4atac/U6atac snRNP complexes in U12-dependent spliceosomes. Within the minor spliceosome, which acts on U12-type introns, interacts with PPIL2 and RBM48. Core component of U2-type precatalytic, catalytic and postcatalytic spliceosomal complexes. Found in a mRNA splicing-dependent exon junction complex (EJC) with SRRM1. Interacts with U5 snRNP proteins SNRP116 and SNRNP40. Interacts with EFTUD2. Interacts (via the MPN (JAB/Mov34) domain) with PRPF3 ('Lys-63'-linked polyubiquitinated); may stabilize the U4/U6-U5 tri-snRNP complex. Interacts (via RNase H homology domain) with AAR2. Interacts with RPAP3 and URI1 in a ZNHIT2-dependent manner. Interacts with C9orf78. Interacts with SNRNP200; the interaction is direct. Interacts with TSSC4; the interaction is direct. In terms of tissue distribution, widely expressed.

It localises to the nucleus. The protein resides in the nucleus speckle. Functionally, plays a role in pre-mRNA splicing as core component of precatalytic, catalytic and postcatalytic spliceosomal complexes, both of the predominant U2-type spliceosome and the minor U12-type spliceosome. Functions as a scaffold that mediates the ordered assembly of spliceosomal proteins and snRNAs. Required for the assembly of the U4/U6-U5 tri-snRNP complex, a building block of the spliceosome. Functions as a scaffold that positions spliceosomal U2, U5 and U6 snRNAs at splice sites on pre-mRNA substrates, so that splicing can occur. Interacts with both the 5' and the 3' splice site. This chain is Pre-mRNA-processing-splicing factor 8 (PRPF8), found in Homo sapiens (Human).